We begin with the raw amino-acid sequence, 400 residues long: S-adenosylmethionine synthase (400 aa).

Histidine 15 provides a ligand contact to ATP. Aspartate 17 lines the Mg(2+) pocket. Glutamate 43 contacts K(+). Residues glutamate 56 and glutamine 99 each contribute to the L-methionine site. Residues 99–109 (QSLEIGAGVDT) are flexible loop. Residues 174–176 (DGK), aspartate 254, 260–261 (RK), alanine 277, and lysine 281 each bind ATP. Aspartate 254 contacts L-methionine. Position 285 (lysine 285) interacts with L-methionine.

Belongs to the AdoMet synthase family. As to quaternary structure, homotetramer; dimer of dimers. Mg(2+) serves as cofactor. Requires K(+) as cofactor.

The protein resides in the cytoplasm. It catalyses the reaction L-methionine + ATP + H2O = S-adenosyl-L-methionine + phosphate + diphosphate. Its pathway is amino-acid biosynthesis; S-adenosyl-L-methionine biosynthesis; S-adenosyl-L-methionine from L-methionine: step 1/1. Functionally, catalyzes the formation of S-adenosylmethionine (AdoMet) from methionine and ATP. The overall synthetic reaction is composed of two sequential steps, AdoMet formation and the subsequent tripolyphosphate hydrolysis which occurs prior to release of AdoMet from the enzyme. The polypeptide is S-adenosylmethionine synthase (Corynebacterium kroppenstedtii (strain DSM 44385 / JCM 11950 / CIP 105744 / CCUG 35717)).